A 132-amino-acid polypeptide reads, in one-letter code: Fatty acid-binding protein type 2 (132 aa).

Ala-2 is subject to N-acetylalanine.

Belongs to the calycin superfamily. Fatty-acid binding protein (FABP) family.

The protein is Fatty acid-binding protein type 2 of Fasciola hepatica (Liver fluke).